The following is a 194-amino-acid chain: Putative manganese efflux pump MntP (194 aa).

The next 6 membrane-spanning stretches (helical) occupy residues 3–23, 37–57, 69–89, 110–132, 147–167, and 172–192; these read PFSI…AAIG, LRAG…GWLL, DHWI…VAGL, LGLA…SLAF, CTFS…NLIG, and MLGG…HLSG.

Belongs to the MntP (TC 9.B.29) family.

It localises to the cell inner membrane. In terms of biological role, probably functions as a manganese efflux pump. The polypeptide is Putative manganese efflux pump MntP (Xanthomonas axonopodis pv. citri (strain 306)).